Consider the following 226-residue polypeptide: ATP synthase F(0) complex subunit a (226 aa).

The next 6 membrane-spanning stretches (helical) occupy residues 9-29 (FITP…FPAM), 68-88 (WALM…LGLV), 97-117 (QLSM…ITGF), 138-158 (IPML…ALAI), 164-184 (ITAG…LTSI), and 201-223 (ILEF…LYLH).

It belongs to the ATPase A chain family. Component of the ATP synthase complex composed at least of ATP5F1A/subunit alpha, ATP5F1B/subunit beta, ATP5MC1/subunit c (homooctomer), MT-ATP6/subunit a, MT-ATP8/subunit 8, ATP5ME/subunit e, ATP5MF/subunit f, ATP5MG/subunit g, ATP5MK/subunit k, ATP5MJ/subunit j, ATP5F1C/subunit gamma, ATP5F1D/subunit delta, ATP5F1E/subunit epsilon, ATP5PF/subunit F6, ATP5PB/subunit b, ATP5PD/subunit d, ATP5PO/subunit OSCP. ATP synthase complex consists of a soluble F(1) head domain (subunits alpha(3) and beta(3)) - the catalytic core - and a membrane F(0) domain - the membrane proton channel (subunits c, a, 8, e, f, g, k and j). These two domains are linked by a central stalk (subunits gamma, delta, and epsilon) rotating inside the F1 region and a stationary peripheral stalk (subunits F6, b, d, and OSCP). Interacts with DNAJC30; interaction is direct.

It localises to the mitochondrion inner membrane. It catalyses the reaction H(+)(in) = H(+)(out). Functionally, subunit a, of the mitochondrial membrane ATP synthase complex (F(1)F(0) ATP synthase or Complex V) that produces ATP from ADP in the presence of a proton gradient across the membrane which is generated by electron transport complexes of the respiratory chain. ATP synthase complex consist of a soluble F(1) head domain - the catalytic core - and a membrane F(1) domain - the membrane proton channel. These two domains are linked by a central stalk rotating inside the F(1) region and a stationary peripheral stalk. During catalysis, ATP synthesis in the catalytic domain of F(1) is coupled via a rotary mechanism of the central stalk subunits to proton translocation. With the subunit c (ATP5MC1), forms the proton-conducting channel in the F(0) domain, that contains two crucial half-channels (inlet and outlet) that facilitate proton movement from the mitochondrial intermembrane space (IMS) into the matrix. Protons are taken up via the inlet half-channel and released through the outlet half-channel, following a Grotthuss mechanism. This Dugong dugon (Dugong) protein is ATP synthase F(0) complex subunit a.